The primary structure comprises 891 residues: Alanine--tRNA ligase (891 aa).

Zn(2+) is bound by residues H564, H568, C677, and H681.

This sequence belongs to the class-II aminoacyl-tRNA synthetase family. It depends on Zn(2+) as a cofactor.

It localises to the cytoplasm. It catalyses the reaction tRNA(Ala) + L-alanine + ATP = L-alanyl-tRNA(Ala) + AMP + diphosphate. Catalyzes the attachment of alanine to tRNA(Ala) in a two-step reaction: alanine is first activated by ATP to form Ala-AMP and then transferred to the acceptor end of tRNA(Ala). Also edits incorrectly charged Ser-tRNA(Ala) and Gly-tRNA(Ala) via its editing domain. The polypeptide is Alanine--tRNA ligase (Bradyrhizobium sp. (strain ORS 278)).